Consider the following 382-residue polypeptide: S-adenosylmethionine synthase (382 aa).

Position 16 (H16) interacts with ATP. D18 is a Mg(2+) binding site. Residue E44 participates in K(+) binding. Residues E57 and Q100 each contribute to the L-methionine site. Positions Q100 to E110 are flexible loop. ATP contacts are provided by residues D165–K167, D240, R246–K247, A263, and K267. Residue D240 coordinates L-methionine. K271 provides a ligand contact to L-methionine.

The protein belongs to the AdoMet synthase family. As to quaternary structure, homotetramer; dimer of dimers. Requires Mg(2+) as cofactor. K(+) is required as a cofactor.

The protein localises to the cytoplasm. The enzyme catalyses L-methionine + ATP + H2O = S-adenosyl-L-methionine + phosphate + diphosphate. It participates in amino-acid biosynthesis; S-adenosyl-L-methionine biosynthesis; S-adenosyl-L-methionine from L-methionine: step 1/1. In terms of biological role, catalyzes the formation of S-adenosylmethionine (AdoMet) from methionine and ATP. The overall synthetic reaction is composed of two sequential steps, AdoMet formation and the subsequent tripolyphosphate hydrolysis which occurs prior to release of AdoMet from the enzyme. This Alcanivorax borkumensis (strain ATCC 700651 / DSM 11573 / NCIMB 13689 / SK2) protein is S-adenosylmethionine synthase.